The chain runs to 97 residues: Co-chaperonin GroES (97 aa).

It belongs to the GroES chaperonin family. Heptamer of 7 subunits arranged in a ring. Interacts with the chaperonin GroEL.

It is found in the cytoplasm. Together with the chaperonin GroEL, plays an essential role in assisting protein folding. The GroEL-GroES system forms a nano-cage that allows encapsulation of the non-native substrate proteins and provides a physical environment optimized to promote and accelerate protein folding. GroES binds to the apical surface of the GroEL ring, thereby capping the opening of the GroEL channel. In Pectobacterium atrosepticum (strain SCRI 1043 / ATCC BAA-672) (Erwinia carotovora subsp. atroseptica), this protein is Co-chaperonin GroES.